A 536-amino-acid chain; its full sequence is Transcription factor cheR (536 aa).

The zn(2)-C6 fungal-type DNA-binding region spans 19–57 (CDRCHRHKLRCERSSVIVNGGVAVPLGPCKRCLKACIPC). Disordered regions lie at residues 70–122 (AKTG…LSGT) and 220–243 (ALTD…PREE). A compositionally biased stretch (low complexity) spans 88–108 (AASPAKRAPSPARRPTASTPR).

It localises to the nucleus. Transcription factor; part of the gene cluster that mediates the biosynthesis of chaetoglobosin A which has a unique inhibitory activity against actin polymerization in mammalian cells. Chaetoglobosin A and its intermediates are involved in the morphological differentiation of C.globosum. Binds directly to asymmetric direct repeats present in the promoters of the chaetoglobosin A cluster genes. The chain is Transcription factor cheR from Chaetomium globosum (strain ATCC 6205 / CBS 148.51 / DSM 1962 / NBRC 6347 / NRRL 1970) (Soil fungus).